A 940-amino-acid polypeptide reads, in one-letter code: UvrABC system protein A (940 aa).

31–38 is a binding site for ATP; that stretch reads GLSGSGKS. The segment at 252–279 adopts a C4-type zinc-finger fold; sequence CPQCGYSMQELEPRLFSFNNPAGACGTC. ABC transporter domains follow at residues 309 to 586 and 606 to 936; these read WDQK…PNSL and RDPK…RFLK. 639 to 646 contacts ATP; it reads GVSGSGKS. The C4-type zinc finger occupies 739–765; that stretch reads CEACQGDGVIKVEMHFLPDVYVPCDVC.

The protein belongs to the ABC transporter superfamily. UvrA family. Forms a heterotetramer with UvrB during the search for lesions.

The protein localises to the cytoplasm. Its function is as follows. The UvrABC repair system catalyzes the recognition and processing of DNA lesions. UvrA is an ATPase and a DNA-binding protein. A damage recognition complex composed of 2 UvrA and 2 UvrB subunits scans DNA for abnormalities. When the presence of a lesion has been verified by UvrB, the UvrA molecules dissociate. This is UvrABC system protein A from Vibrio parahaemolyticus serotype O3:K6 (strain RIMD 2210633).